Consider the following 240-residue polypeptide: Uridylate kinase (240 aa).

Residue 12-15 (KLSG) coordinates ATP. Glycine 54 contributes to the UMP binding site. Glycine 55 and arginine 59 together coordinate ATP. UMP-binding positions include aspartate 74 and 135-142 (TGNPFFTT). ATP is bound by residues threonine 162, tyrosine 168, and aspartate 171.

It belongs to the UMP kinase family. In terms of assembly, homohexamer.

The protein resides in the cytoplasm. It carries out the reaction UMP + ATP = UDP + ADP. It participates in pyrimidine metabolism; CTP biosynthesis via de novo pathway; UDP from UMP (UMPK route): step 1/1. Inhibited by UTP. In terms of biological role, catalyzes the reversible phosphorylation of UMP to UDP. In Xanthomonas axonopodis pv. citri (strain 306), this protein is Uridylate kinase.